The following is a 251-amino-acid chain: Triosephosphate isomerase (251 aa).

Asparagine 9–lysine 11 contacts substrate. Histidine 94 (electrophile) is an active-site residue. The Proton acceptor role is filled by glutamate 166. Residues glycine 172, serine 211, and glycine 232–glycine 233 contribute to the substrate site.

It belongs to the triosephosphate isomerase family. As to quaternary structure, homodimer.

The protein localises to the cytoplasm. It carries out the reaction D-glyceraldehyde 3-phosphate = dihydroxyacetone phosphate. The protein operates within carbohydrate biosynthesis; gluconeogenesis. It functions in the pathway carbohydrate degradation; glycolysis; D-glyceraldehyde 3-phosphate from glycerone phosphate: step 1/1. Functionally, involved in the gluconeogenesis. Catalyzes stereospecifically the conversion of dihydroxyacetone phosphate (DHAP) to D-glyceraldehyde-3-phosphate (G3P). The chain is Triosephosphate isomerase from Stenotrophomonas maltophilia (strain K279a).